A 426-amino-acid polypeptide reads, in one-letter code: ATP-dependent Clp protease ATP-binding subunit ClpX (426 aa).

The ClpX-type ZB domain occupies 1–52 (MNEIKKRCSFCNKEESLDNPIINSGITPDVYICNYCLIVGSEILTGYLNKNP). Zn(2+) is bound by residues Cys-8, Cys-11, Cys-33, and Cys-36. 129-136 (PTGSGKTL) lines the ATP pocket.

Belongs to the ClpX chaperone family. In terms of assembly, component of the ClpX-ClpP complex. Forms a hexameric ring that, in the presence of ATP, binds to fourteen ClpP subunits assembled into a disk-like structure with a central cavity, resembling the structure of eukaryotic proteasomes.

ATP-dependent specificity component of the Clp protease. It directs the protease to specific substrates. Can perform chaperone functions in the absence of ClpP. The polypeptide is ATP-dependent Clp protease ATP-binding subunit ClpX (Helicobacter hepaticus (strain ATCC 51449 / 3B1)).